The primary structure comprises 333 residues: tRNA N6-adenosine threonylcarbamoyltransferase (333 aa).

Fe cation-binding residues include histidine 111 and histidine 115. Substrate is bound by residues valine 134 to glycine 138, aspartate 167, glycine 180, aspartate 184, and asparagine 273. Aspartate 302 contacts Fe cation.

Belongs to the KAE1 / TsaD family. The cofactor is Fe(2+).

It localises to the cytoplasm. The enzyme catalyses L-threonylcarbamoyladenylate + adenosine(37) in tRNA = N(6)-L-threonylcarbamoyladenosine(37) in tRNA + AMP + H(+). Its function is as follows. Required for the formation of a threonylcarbamoyl group on adenosine at position 37 (t(6)A37) in tRNAs that read codons beginning with adenine. Is involved in the transfer of the threonylcarbamoyl moiety of threonylcarbamoyl-AMP (TC-AMP) to the N6 group of A37, together with TsaE and TsaB. TsaD likely plays a direct catalytic role in this reaction. This is tRNA N6-adenosine threonylcarbamoyltransferase from Anaeromyxobacter sp. (strain Fw109-5).